Consider the following 271-residue polypeptide: Formamidopyrimidine-DNA glycosylase (271 aa).

Pro-2 serves as the catalytic Schiff-base intermediate with DNA. Glu-3 functions as the Proton donor in the catalytic mechanism. Lys-57 (proton donor; for beta-elimination activity) is an active-site residue. Residues His-90, Arg-109, and Lys-151 each contribute to the DNA site. Residues 236 to 270 (HVYGRGGDTCTHCGQLLSEIRLGQRATVFCSICQQ) form an FPG-type zinc finger. Arg-260 functions as the Proton donor; for delta-elimination activity in the catalytic mechanism.

It belongs to the FPG family. In terms of assembly, monomer. Zn(2+) serves as cofactor.

It catalyses the reaction Hydrolysis of DNA containing ring-opened 7-methylguanine residues, releasing 2,6-diamino-4-hydroxy-5-(N-methyl)formamidopyrimidine.. It carries out the reaction 2'-deoxyribonucleotide-(2'-deoxyribose 5'-phosphate)-2'-deoxyribonucleotide-DNA = a 3'-end 2'-deoxyribonucleotide-(2,3-dehydro-2,3-deoxyribose 5'-phosphate)-DNA + a 5'-end 5'-phospho-2'-deoxyribonucleoside-DNA + H(+). In terms of biological role, involved in base excision repair of DNA damaged by oxidation or by mutagenic agents. Acts as a DNA glycosylase that recognizes and removes damaged bases. Has a preference for oxidized purines, such as 7,8-dihydro-8-oxoguanine (8-oxoG). Has AP (apurinic/apyrimidinic) lyase activity and introduces nicks in the DNA strand. Cleaves the DNA backbone by beta-delta elimination to generate a single-strand break at the site of the removed base with both 3'- and 5'-phosphates. The polypeptide is Formamidopyrimidine-DNA glycosylase (Shewanella piezotolerans (strain WP3 / JCM 13877)).